The sequence spans 174 residues: Transcriptional repressor NrdR (174 aa).

Residues 3-34 (CPFCQHNDTRVIDSRVSEDGTTIRRRRECEAC) fold into a zinc finger. An ATP-cone domain is found at 49–139 (PTVVKSDGGR…VYRSFQDVAD (91 aa)).

Belongs to the NrdR family. The cofactor is Zn(2+).

Functionally, negatively regulates transcription of bacterial ribonucleotide reductase nrd genes and operons by binding to NrdR-boxes. The polypeptide is Transcriptional repressor NrdR (Xanthomonas axonopodis pv. citri (strain 306)).